Consider the following 302-residue polypeptide: Rab effector Noc2 (302 aa).

Positions 41 to 158 constitute a RabBD domain; it reads QRRTQCLSPG…KRSGAWFYKG (118 aa). The segment at 89–146 adopts an FYVE-type zinc-finger fold; sequence GNGVSQCLLCGEMLGFLGSSSVFCKDCRKKVCTKCGIEASPGQKRPLWLCKICSEQRE. Cysteine 95, cysteine 98, cysteine 112, cysteine 115, cysteine 120, cysteine 123, cysteine 138, and cysteine 141 together coordinate Zn(2+). 2 disordered regions span residues 174–194 and 206–302; these read DPHF…SAEV and VSSD…TTHY. A Phosphoserine modification is found at serine 248. The span at 258-269 shows a compositional bias: low complexity; sequence SHLSGSQSSLGS.

As to quaternary structure, recruited to dense-core vesicles through specific interaction with RAB27A in endocrine cells. Interacts with RAB3A, RAB3B, RAB3C and RAB3D. Interacts with ZYX. Highly expressed in pancreatic islets and parotid. High to moderate expression in adrenal gland, pituitary gland and ovary.

It is found in the cytoplasm. Its subcellular location is the cytoplasmic vesicle. It localises to the secretory vesicle membrane. Functionally, rab GTPase effector involved in the late steps of regulated exocytosis, both in endocrine and exocrine cells. Regulates the exocytosis of dense-core vesicles in neuroendocrine cells through interaction with RAB27A. Acts as a potential RAB3B effector protein in epithelial cells. This Rattus norvegicus (Rat) protein is Rab effector Noc2 (Rph3al).